A 100-amino-acid polypeptide reads, in one-letter code: uncharacterized protein (100 aa).

A disordered region spans residues 40-100 (GDQMARKATS…DPTKNKSGRG (61 aa)).

This is an uncharacterized protein from Mycobacterium tuberculosis (strain ATCC 25618 / H37Rv).